Here is a 255-residue protein sequence, read N- to C-terminus: Phosphoribosylformylglycinamidine synthase subunit PurQ (255 aa).

Positions T6–V255 constitute a Glutamine amidotransferase type-1 domain. C96 acts as the Nucleophile in catalysis. Active-site residues include H217 and E219.

Part of the FGAM synthase complex composed of 1 PurL, 1 PurQ and 2 PurS subunits.

The protein localises to the cytoplasm. It catalyses the reaction N(2)-formyl-N(1)-(5-phospho-beta-D-ribosyl)glycinamide + L-glutamine + ATP + H2O = 2-formamido-N(1)-(5-O-phospho-beta-D-ribosyl)acetamidine + L-glutamate + ADP + phosphate + H(+). The catalysed reaction is L-glutamine + H2O = L-glutamate + NH4(+). The protein operates within purine metabolism; IMP biosynthesis via de novo pathway; 5-amino-1-(5-phospho-D-ribosyl)imidazole from N(2)-formyl-N(1)-(5-phospho-D-ribosyl)glycinamide: step 1/2. In terms of biological role, part of the phosphoribosylformylglycinamidine synthase complex involved in the purines biosynthetic pathway. Catalyzes the ATP-dependent conversion of formylglycinamide ribonucleotide (FGAR) and glutamine to yield formylglycinamidine ribonucleotide (FGAM) and glutamate. The FGAM synthase complex is composed of three subunits. PurQ produces an ammonia molecule by converting glutamine to glutamate. PurL transfers the ammonia molecule to FGAR to form FGAM in an ATP-dependent manner. PurS interacts with PurQ and PurL and is thought to assist in the transfer of the ammonia molecule from PurQ to PurL. This is Phosphoribosylformylglycinamidine synthase subunit PurQ from Dehalococcoides mccartyi (strain ATCC BAA-2266 / KCTC 15142 / 195) (Dehalococcoides ethenogenes (strain 195)).